Reading from the N-terminus, the 352-residue chain is Ketoisovalerate oxidoreductase subunit VorB (352 aa).

In terms of assembly, heterotrimer of the VorA, VorB and VorC subunits.

It carries out the reaction 3-methyl-2-oxobutanoate + 2 oxidized [2Fe-2S]-[ferredoxin] + CoA = 2-methylpropanoyl-CoA + 2 reduced [2Fe-2S]-[ferredoxin] + CO2 + H(+). This chain is Ketoisovalerate oxidoreductase subunit VorB (vorB), found in Methanothermobacter thermautotrophicus (strain ATCC 29096 / DSM 1053 / JCM 10044 / NBRC 100330 / Delta H) (Methanobacterium thermoautotrophicum).